The chain runs to 67 residues: MGQKTALGSLLKSIGNSGQGKVVAGWGAVPVMAFIGVLLLVFLVILLQIYNQSLLLQGFSVDWNGVK.

Residues 27 to 47 (GAVPVMAFIGVLLLVFLVILL) form a helical membrane-spanning segment.

It belongs to the PsbH family. PSII is composed of 1 copy each of membrane proteins PsbA, PsbB, PsbC, PsbD, PsbE, PsbF, PsbH, PsbI, PsbJ, PsbK, PsbL, PsbM, PsbT, PsbX, PsbY, Psb30/Ycf12, peripheral proteins PsbO, CyanoQ (PsbQ), PsbU, PsbV and a large number of cofactors. It forms dimeric complexes.

It localises to the cellular thylakoid membrane. In terms of biological role, one of the components of the core complex of photosystem II (PSII), required for its stability and/or assembly. PSII is a light-driven water:plastoquinone oxidoreductase that uses light energy to abstract electrons from H(2)O, generating O(2) and a proton gradient subsequently used for ATP formation. It consists of a core antenna complex that captures photons, and an electron transfer chain that converts photonic excitation into a charge separation. The chain is Photosystem II reaction center protein H from Prochlorococcus marinus (strain MIT 9211).